Reading from the N-terminus, the 389-residue chain is Ecto-ADP-ribosyltransferase 3 (389 aa).

Residues 1–26 form the signal peptide; it reads MKTGHFEIVTMLLATMILVDIFQVKA. Residues Cys43 and Cys256 are joined by a disulfide bond. Residues 64-251 enclose the TR mART core domain; it reads QQLDTVWENA…LILQSINKTC (188 aa). NAD(+) is bound by residues Tyr101 and Arg163. Asn248 carries an N-linked (GlcNAc...) asparagine glycan. A run of 3 repeats spans residues 283-292, 293-302, and 303-312. The interval 283 to 312 is 3 X 10 AA tandem repeats of [GS]-E-K-N-[QW]-K-L-E-D-H; that stretch reads GEKNQKLEDHSEKNWKLEDHGEKNQKLEDH. The segment at 325–362 is disordered; that stretch reads MKIPEPFPLPEDKSQGNINNPTPGPVPVPGPKSHPSAS. O-linked (GalNAc...) threonine glycosylation is present at Thr346. Over residues 346-356 the composition is skewed to pro residues; the sequence is TPGPVPVPGPK. Ser362 carries the GPI-anchor amidated serine lipid modification. The propeptide at 363–389 is removed in mature form; that stretch reads SGKLLLPQFGMVIILISVSAINLFVAL.

Belongs to the Arg-specific ADP-ribosyltransferase family. In terms of processing, O-glycosylated with core 1 or possibly core 8 glycans. In terms of tissue distribution, testis specific.

The protein localises to the cell membrane. The catalysed reaction is L-arginyl-[protein] + NAD(+) = N(omega)-(ADP-D-ribosyl)-L-arginyl-[protein] + nicotinamide + H(+). This chain is Ecto-ADP-ribosyltransferase 3 (ART3), found in Homo sapiens (Human).